A 236-amino-acid polypeptide reads, in one-letter code: Phosphoribosylaminoimidazole-succinocarboxamide synthase (236 aa).

The protein belongs to the SAICAR synthetase family.

It carries out the reaction 5-amino-1-(5-phospho-D-ribosyl)imidazole-4-carboxylate + L-aspartate + ATP = (2S)-2-[5-amino-1-(5-phospho-beta-D-ribosyl)imidazole-4-carboxamido]succinate + ADP + phosphate + 2 H(+). Its pathway is purine metabolism; IMP biosynthesis via de novo pathway; 5-amino-1-(5-phospho-D-ribosyl)imidazole-4-carboxamide from 5-amino-1-(5-phospho-D-ribosyl)imidazole-4-carboxylate: step 1/2. This Rickettsia africae (strain ESF-5) protein is Phosphoribosylaminoimidazole-succinocarboxamide synthase.